Consider the following 306-residue polypeptide: RNA pseudouridylate synthase domain-containing protein 1 (306 aa).

At M1 the chain carries N-acetylmethionine. D67 is a catalytic residue. Residues 255-290 (RTDPDPDPMSGGPRPCSPSTPQPRPGRPPPETEAQR) form a disordered region. A compositionally biased stretch (pro residues) spans 269-285 (PCSPSTPQPRPGRPPPE).

Belongs to the pseudouridine synthase RluA family.

This chain is RNA pseudouridylate synthase domain-containing protein 1 (Rpusd1), found in Mus musculus (Mouse).